A 537-amino-acid polypeptide reads, in one-letter code: Probable sterol O-acyltransferase 1 (537 aa).

4 helical membrane passes run 98-118 (FRGF…QLYA), 140-160 (FFVL…SYGL), 174-194 (LGYT…VYWV), and 199-219 (FPIV…MKQF). An N-linked (GlcNAc...) asparagine glycan is attached at N250. The next 2 membrane-spanning stretches (helical) occupy residues 344–364 (FGLL…SAVA) and 384–404 (IMFP…DCIL). The FYXDWWN motif motif lies at 418 to 424 (FYGAWWN). The next 2 membrane-spanning stretches (helical) occupy residues 462-482 (AVLL…LLAT) and 517-537 (VFFW…YIVF). H474 is an active-site residue.

The protein belongs to the membrane-bound acyltransferase family. Sterol o-acyltransferase subfamily.

The protein resides in the endoplasmic reticulum membrane. In terms of biological role, sterol O-acyltransferase that catalyzes the formation of stery esters. The sequence is that of Probable sterol O-acyltransferase 1 (are1) from Schizosaccharomyces pombe (strain 972 / ATCC 24843) (Fission yeast).